The following is a 130-amino-acid chain: Small ribosomal subunit protein uS9 (130 aa).

The protein belongs to the universal ribosomal protein uS9 family.

The polypeptide is Small ribosomal subunit protein uS9 (Geobacillus sp. (strain WCH70)).